Reading from the N-terminus, the 87-residue chain is uncharacterized protein (87 aa).

The interval 43–87 (NQGYGQNFGDASGFMGTRSHVDDRDQIDSPASFESEAVNSSIKRK) is disordered.

This is an uncharacterized protein from Bacillus subtilis (strain 168).